Here is a 225-residue protein sequence, read N- to C-terminus: Ribonuclease 3 (225 aa).

The 123-residue stretch at 7-129 (IPRLCRTLGY…IIGAVYLDSD (123 aa)) folds into the RNase III domain. Glutamate 42 is a Mg(2+) binding site. The active site involves aspartate 46. Residues aspartate 115 and glutamate 118 each coordinate Mg(2+). The active site involves glutamate 118. Residues 155–225 (DPKTLLQELL…AAQALELIKR (71 aa)) form the DRBM domain.

This sequence belongs to the ribonuclease III family. In terms of assembly, homodimer. Mg(2+) is required as a cofactor.

The protein resides in the cytoplasm. The enzyme catalyses Endonucleolytic cleavage to 5'-phosphomonoester.. Digests double-stranded RNA. Involved in the processing of primary rRNA transcript to yield the immediate precursors to the large and small rRNAs (23S and 16S). Processes some mRNAs, and tRNAs when they are encoded in the rRNA operon. Processes pre-crRNA and tracrRNA of type II CRISPR loci if present in the organism. The polypeptide is Ribonuclease 3 (Shewanella woodyi (strain ATCC 51908 / MS32)).